Consider the following 439-residue polypeptide: O-fucosyltransferase 13 (439 aa).

A helical; Signal-anchor for type II membrane protein membrane pass occupies residues 8-28 (PLFVFVLTFSLLLVVILLSPS). N-linked (GlcNAc...) asparagine glycosylation is found at Asn104 and Asn119. A substrate-binding site is contributed by 238-240 (HLR). The N-linked (GlcNAc...) asparagine glycan is linked to Asn293.

It belongs to the glycosyltransferase GT106 family.

The protein resides in the membrane. It functions in the pathway glycan metabolism. In Arabidopsis thaliana (Mouse-ear cress), this protein is O-fucosyltransferase 13.